The chain runs to 727 residues: Sodium-dependent neutral amino acid transporter SLC6A17 (727 aa).

Topologically, residues 1 to 68 (MPKNSKVTQR…DRPAWNSKLQ (68 aa)) are cytoplasmic. Phosphoserine occurs at positions 13 and 20. Residues 69–89 (YILAQIGFSVGLGNIWRFPYL) traverse the membrane as a helical segment. At 90–96 (CQKNGGG) the chain is on the extracellular side. Residues 97-116 (AYLVPYLVLLIIIGIPLFFL) traverse the membrane as a helical segment. Residues 117–140 (ELAVGQRIRRGSIGVWHYVCPRLG) lie on the Cytoplasmic side of the membrane. The helical transmembrane segment at 141-161 (GIGFSSCIVCLFVGLYYNVII) threads the bilayer. Topologically, residues 162–224 (GWSVFYFFKS…NSISESGGLN (63 aa)) are extracellular. Asn-186 carries N-linked (GlcNAc...) asparagine glycosylation. A helical membrane pass occupies residues 225 to 243 (WKMTLCLLVAWSIVGMAVV). Over 244 to 251 (KGIQSSGK) the chain is Cytoplasmic. Residues 252-269 (VMYFSSLFPYVVLACFLV) traverse the membrane as a helical segment. Residues 270–304 (RGLLLRGAVDGILHMFTPKLDKMLDPQVWREAATQ) lie on the Extracellular side of the membrane. The chain crosses the membrane as a helical span at residues 305–322 (VFFALGLGFGGVIAFSSY). Topologically, residues 323–333 (NKQDNNCHFDA) are cytoplasmic. The chain crosses the membrane as a helical span at residues 334–355 (ALVSFINFFTSVLATLVVFAVL). The Extracellular segment spans residues 356–451 (GFKANIMNEK…FIAFTEAMTH (96 aa)). Tyr-377 carries the phosphotyrosine modification. Residue Asn-393 is glycosylated (N-linked (GlcNAc...) asparagine). The helical transmembrane segment at 452 to 471 (FPASPFWSVMFFLMLINLGL) threads the bilayer. Topologically, residues 472 to 494 (GSMIGTMAGITTPIIDTFKVPKE) are cytoplasmic. Residues 495 to 513 (MFTVGCCVFAFFVGLLFVQ) form a helical membrane-spanning segment. Over 514–528 (RSGNYFVTMFDDYSA) the chain is Extracellular. The chain crosses the membrane as a helical span at residues 529 to 549 (TLPLTVIVILENIAVAWIYGT). Over 550–569 (KKFMQELTEMLGFQPYRFYF) the chain is Cytoplasmic. A helical membrane pass occupies residues 570 to 591 (YMWKFVSPLCMAVLTTASIIQL). At 592–618 (GVSPPGYSAWIKEEAAERYLYFPNWAM) the chain is on the extracellular side. Residues 619-641 (ALLITLIAVATLPIPVVFILRHF) form a helical membrane-spanning segment. The Cytoplasmic portion of the chain corresponds to 642 to 727 (HLLSDGSNTL…LLASTPESEL (86 aa)). Residues Ser-665 and Ser-701 each carry the phosphoserine modification. The tract at residues 680 to 727 (VPSEAPSPMPTHRSYLGPGSTSPLDNSNNPNGRYGSGYLLASTPESEL) is disordered. The span at 698–710 (GSTSPLDNSNNPN) shows a compositional bias: polar residues.

It belongs to the sodium:neurotransmitter symporter (SNF) (TC 2.A.22) family. As to expression, expressed in the brain. The strongest expression levels in embryonic, postnatal, and adult stages are found in both cortical and hippocampal tissues.

The protein localises to the cytoplasmic vesicle. It localises to the secretory vesicle. It is found in the synaptic vesicle membrane. The protein resides in the postsynapse. Its subcellular location is the presynapse. The catalysed reaction is L-proline(in) + Na(+)(in) = L-proline(out) + Na(+)(out). The enzyme catalyses L-leucine(in) + Na(+)(in) = L-leucine(out) + Na(+)(out). It catalyses the reaction glycine(in) + Na(+)(in) = glycine(out) + Na(+)(out). It carries out the reaction L-alanine(in) + Na(+)(in) = L-alanine(out) + Na(+)(out). The catalysed reaction is L-glutamine(in) + Na(+)(in) = L-glutamine(out) + Na(+)(out). Its function is as follows. Synaptic vesicle transporter with apparent selectivity for neutral amino acids. The transport is sodium-coupled but chloride-independent, likely driven by the proton electrochemical gradient generated by vacuolar H(+)-ATPase in an overall electrogenic mechanism. May contribute to the synaptic uptake of neurotransmitter precursors in a process coupled in part to vesicle exocytosis. The sequence is that of Sodium-dependent neutral amino acid transporter SLC6A17 from Mus musculus (Mouse).